We begin with the raw amino-acid sequence, 441 residues long: Ribosomal protein uS12 methylthiotransferase RimO (441 aa).

The 111-residue stretch at 7 to 117 (PKISFVSLGC…VLEAVHRAKP (111 aa)) folds into the MTTase N-terminal domain. The [4Fe-4S] cluster site is built by Cys-16, Cys-52, Cys-81, Cys-148, Cys-152, and Cys-155. A Radical SAM core domain is found at 134–371 (LTPRHYAYLK…MARQQVISAR (238 aa)). A TRAM domain is found at 374 to 440 (KRKVGTRQQI…AYDLHGTVAG (67 aa)).

Belongs to the methylthiotransferase family. RimO subfamily. The cofactor is [4Fe-4S] cluster.

Its subcellular location is the cytoplasm. The catalysed reaction is L-aspartate(89)-[ribosomal protein uS12]-hydrogen + (sulfur carrier)-SH + AH2 + 2 S-adenosyl-L-methionine = 3-methylsulfanyl-L-aspartate(89)-[ribosomal protein uS12]-hydrogen + (sulfur carrier)-H + 5'-deoxyadenosine + L-methionine + A + S-adenosyl-L-homocysteine + 2 H(+). In terms of biological role, catalyzes the methylthiolation of an aspartic acid residue of ribosomal protein uS12. The sequence is that of Ribosomal protein uS12 methylthiotransferase RimO from Rhodopseudomonas palustris (strain BisB5).